The sequence spans 55 residues: ATP synthase small subunit 6-A, mitochondrial (55 aa).

A mitochondrion-targeting transit peptide spans 1–11 (MRLFDPWPVFF). Residues 21–39 (FLTGFAVTGVLITKLTAGL) traverse the membrane as a helical segment.

Belongs to the ATPase 6 subunit family.

The protein localises to the mitochondrion inner membrane. Functionally, mitochondrial membrane ATP synthase (F(1)F(0) ATP synthase or Complex V) produces ATP from ADP in the presence of a proton gradient across the membrane which is generated by electron transport complexes of the respiratory chain. F-type ATPases consist of two structural domains, F(1) - containing the extramembraneous catalytic core and F(0) - containing the membrane proton channel, linked together by a central stalk and a peripheral stalk. During catalysis, ATP synthesis in the catalytic domain of F(1) is coupled via a rotary mechanism of the central stalk subunits to proton translocation. Part of the complex F(0) domain. Confers tolerance to several abiotic stresses (e.g. salt, mannitol, drought, oxidative and cold stresses), probably by providing additional energy needed for cell homeostasis. The protein is ATP synthase small subunit 6-A, mitochondrial of Arabidopsis thaliana (Mouse-ear cress).